A 354-amino-acid polypeptide reads, in one-letter code: NADH-quinone oxidoreductase subunit H (354 aa).

The next 8 helical transmembrane spans lie at 25 to 45 (LVRILVVAVVILLCVAYLILW), 91 to 111 (WLYLVAPVMTVVPAFAVWAVI), 126 to 146 (LLYAMAISSIGVYAVILAGWA), 170 to 190 (MGFALVLVLMTAGSLNLSEIV), 205 to 225 (FLSWNWLPLLPVFVIYFISGI), 253 to 273 (MAFALFFLAEYINMIVISALA), 290 to 310 (FIPGIFWLVLKIFALLSVFIW), and 330 to 350 (VFLPVCVFWVIVVGFWMMSPL).

This sequence belongs to the complex I subunit 1 family. In terms of assembly, NDH-1 is composed of 14 different subunits. Subunits NuoA, H, J, K, L, M, N constitute the membrane sector of the complex.

It is found in the cell inner membrane. The enzyme catalyses a quinone + NADH + 5 H(+)(in) = a quinol + NAD(+) + 4 H(+)(out). Functionally, NDH-1 shuttles electrons from NADH, via FMN and iron-sulfur (Fe-S) centers, to quinones in the respiratory chain. The immediate electron acceptor for the enzyme in this species is believed to be ubiquinone. Couples the redox reaction to proton translocation (for every two electrons transferred, four hydrogen ions are translocated across the cytoplasmic membrane), and thus conserves the redox energy in a proton gradient. This subunit may bind ubiquinone. The chain is NADH-quinone oxidoreductase subunit H from Burkholderia mallei (strain ATCC 23344).